Consider the following 554-residue polypeptide: Urocanate hydratase (554 aa).

NAD(+) is bound by residues 51 to 52 (GG), Gln-129, 175 to 177 (GMG), Glu-195, 241 to 242 (NA), 262 to 266 (QTSAH), 272 to 273 (YL), and Tyr-321. Cys-409 is an active-site residue. Residue Gly-491 coordinates NAD(+).

The protein belongs to the urocanase family. Requires NAD(+) as cofactor.

It localises to the cytoplasm. The catalysed reaction is 4-imidazolone-5-propanoate = trans-urocanate + H2O. It functions in the pathway amino-acid degradation; L-histidine degradation into L-glutamate; N-formimidoyl-L-glutamate from L-histidine: step 2/3. Catalyzes the conversion of urocanate to 4-imidazolone-5-propionate. This chain is Urocanate hydratase, found in Methylobacterium nodulans (strain LMG 21967 / CNCM I-2342 / ORS 2060).